A 246-amino-acid chain; its full sequence is Pyridoxine 5'-phosphate synthase (246 aa).

3-amino-2-oxopropyl phosphate is bound at residue N12. 14-15 is a 1-deoxy-D-xylulose 5-phosphate binding site; that stretch reads DH. R23 contributes to the 3-amino-2-oxopropyl phosphate binding site. The Proton acceptor role is filled by H48. 1-deoxy-D-xylulose 5-phosphate is bound by residues R50 and H55. E75 (proton acceptor) is an active-site residue. Position 105 (T105) interacts with 1-deoxy-D-xylulose 5-phosphate. H196 functions as the Proton donor in the catalytic mechanism. Residues G197 and 218-219 each bind 3-amino-2-oxopropyl phosphate; that span reads GH.

Belongs to the PNP synthase family. In terms of assembly, homooctamer; tetramer of dimers.

It is found in the cytoplasm. It carries out the reaction 3-amino-2-oxopropyl phosphate + 1-deoxy-D-xylulose 5-phosphate = pyridoxine 5'-phosphate + phosphate + 2 H2O + H(+). Its pathway is cofactor biosynthesis; pyridoxine 5'-phosphate biosynthesis; pyridoxine 5'-phosphate from D-erythrose 4-phosphate: step 5/5. Catalyzes the complicated ring closure reaction between the two acyclic compounds 1-deoxy-D-xylulose-5-phosphate (DXP) and 3-amino-2-oxopropyl phosphate (1-amino-acetone-3-phosphate or AAP) to form pyridoxine 5'-phosphate (PNP) and inorganic phosphate. This is Pyridoxine 5'-phosphate synthase from Pseudomonas putida (strain W619).